The chain runs to 700 residues: Calpain-2 catalytic subunit (700 aa).

Ala2 bears the N-acetylalanine mark. Positions 2-19 (AGIAIKLAKDREAAEGLG) are cleaved as a propeptide — anchors to the small subunit. The Calpain catalytic domain occupies 45 to 344 (LFQDPSFPAL…YSRLEICNLT (300 aa)). Residues Ile89, Gly91, and Asp96 each contribute to the Ca(2+) site. Cys105 is an active-site residue. Residues Glu175, Gln229, and Lys230 each contribute to the Ca(2+) site. Catalysis depends on residues His262 and Asn286. Residues Glu292, Asp299, Gln319, and Glu323 each coordinate Ca(2+). The tract at residues 345–514 (PDTLTCDSYK…KKADYQAVDD (170 aa)) is domain III. The tract at residues 515–529 (EIEANIEEIDANEED) is linker. The interval 530–700 (IDDGFRRLFV…LASWLSFSVL (171 aa)) is domain IV. 16 residues coordinate Ca(2+): Ala542, Asp545, Glu547, Glu552, Asp585, Asp587, Ser589, Lys591, Glu596, Asp615, Asp617, Ser619, Thr621, Glu626, Asp658, and Asn661. EF-hand domains lie at 572–605 (FSIE…TKIQ) and 602–637 (TKIQ…AGFK).

This sequence belongs to the peptidase C2 family. In terms of assembly, forms a heterodimer with a small (regulatory) subunit (CAPNS1). Interacts with CPEB3; this leads to cleavage of CPEB3. The cofactor is Ca(2+). Ubiquitous.

It is found in the cytoplasm. The protein resides in the cell membrane. The catalysed reaction is Broad endopeptidase specificity.. Activated by 200-1000 micromolar concentrations of calcium and inhibited by calpastatin. Functionally, calcium-regulated non-lysosomal thiol-protease which catalyzes limited proteolysis of substrates involved in cytoskeletal remodeling and signal transduction. Proteolytically cleaves MYOC at 'Arg-226'. Proteolytically cleaves CPEB3 following neuronal stimulation which abolishes CPEB3 translational repressor activity, leading to translation of CPEB3 target mRNAs. This Mus musculus (Mouse) protein is Calpain-2 catalytic subunit (Capn2).